We begin with the raw amino-acid sequence, 336 residues long: Dihydroorotate dehydrogenase (quinone) (336 aa).

Residues 62–66 (AGLDK) and threonine 86 each bind FMN. Lysine 66 is a substrate binding site. 111-115 (NRMGF) contacts substrate. FMN contacts are provided by asparagine 139 and asparagine 172. Asparagine 172 provides a ligand contact to substrate. The active-site Nucleophile is serine 175. Asparagine 177 lines the substrate pocket. Lysine 217 and threonine 245 together coordinate FMN. Position 246–247 (246–247 (NT)) interacts with substrate. FMN contacts are provided by residues glycine 268, glycine 297, and 318–319 (YS).

Belongs to the dihydroorotate dehydrogenase family. Type 2 subfamily. As to quaternary structure, monomer. FMN serves as cofactor.

Its subcellular location is the cell membrane. It carries out the reaction (S)-dihydroorotate + a quinone = orotate + a quinol. The protein operates within pyrimidine metabolism; UMP biosynthesis via de novo pathway; orotate from (S)-dihydroorotate (quinone route): step 1/1. Its function is as follows. Catalyzes the conversion of dihydroorotate to orotate with quinone as electron acceptor. The polypeptide is Dihydroorotate dehydrogenase (quinone) (Salmonella agona (strain SL483)).